Here is a 430-residue protein sequence, read N- to C-terminus: Gamma-glutamyl phosphate reductase (430 aa).

It belongs to the gamma-glutamyl phosphate reductase family.

Its subcellular location is the cytoplasm. The enzyme catalyses L-glutamate 5-semialdehyde + phosphate + NADP(+) = L-glutamyl 5-phosphate + NADPH + H(+). It participates in amino-acid biosynthesis; L-proline biosynthesis; L-glutamate 5-semialdehyde from L-glutamate: step 2/2. Catalyzes the NADPH-dependent reduction of L-glutamate 5-phosphate into L-glutamate 5-semialdehyde and phosphate. The product spontaneously undergoes cyclization to form 1-pyrroline-5-carboxylate. The chain is Gamma-glutamyl phosphate reductase from Rhodopseudomonas palustris (strain BisB5).